The chain runs to 378 residues: Putative F-box protein At3g24580 (378 aa).

The 47-residue stretch at 1–47 (MTKMSNLPNDLAEEVLSRVSLTSLRNVRLTCKDWNTLSKGESFAKNH) folds into the F-box domain.

This Arabidopsis thaliana (Mouse-ear cress) protein is Putative F-box protein At3g24580.